Reading from the N-terminus, the 249-residue chain is uncharacterized protein (249 aa).

It localises to the cytoplasm. Its subcellular location is the nucleus. This is an uncharacterized protein from Schizosaccharomyces pombe (strain 972 / ATCC 24843) (Fission yeast).